Here is a 347-residue protein sequence, read N- to C-terminus: NADH-ubiquinone oxidoreductase chain 2 (347 aa).

The next 10 membrane-spanning stretches (helical) occupy residues 3 to 23, 59 to 79, 95 to 115, 127 to 147, 149 to 169, 178 to 198, 200 to 220, 241 to 261, 274 to 294, and 325 to 345; these read PLTL…TVFS, YFLT…LNIL, PVLI…HFWV, GLIL…QISP, INPT…GWGG, ILAY…TFNP, TMVL…MMFM, VSTI…TGFI, GNII…YFYM, and LITP…ALSV.

This sequence belongs to the complex I subunit 2 family. Core subunit of respiratory chain NADH dehydrogenase (Complex I) which is composed of 45 different subunits. Interacts with TMEM242.

It is found in the mitochondrion inner membrane. It catalyses the reaction a ubiquinone + NADH + 5 H(+)(in) = a ubiquinol + NAD(+) + 4 H(+)(out). Functionally, core subunit of the mitochondrial membrane respiratory chain NADH dehydrogenase (Complex I) which catalyzes electron transfer from NADH through the respiratory chain, using ubiquinone as an electron acceptor. Essential for the catalytic activity and assembly of complex I. The polypeptide is NADH-ubiquinone oxidoreductase chain 2 (Oryctolagus cuniculus (Rabbit)).